The primary structure comprises 874 residues: Leucine--tRNA ligase (874 aa).

A 'HIGH' region motif is present at residues 43-53; the sequence is PYPSGRIHIGH. Residues 630–634 carry the 'KMSKS' region motif; the sequence is KMSKS. Lys633 provides a ligand contact to ATP.

It belongs to the class-I aminoacyl-tRNA synthetase family.

It localises to the cytoplasm. The catalysed reaction is tRNA(Leu) + L-leucine + ATP = L-leucyl-tRNA(Leu) + AMP + diphosphate. The polypeptide is Leucine--tRNA ligase (Bradyrhizobium diazoefficiens (strain JCM 10833 / BCRC 13528 / IAM 13628 / NBRC 14792 / USDA 110)).